The sequence spans 452 residues: Isocitrate dehydrogenase [NADP], mitochondrial (452 aa).

A mitochondrion-targeting transit peptide spans 1 to 39 (MAGYLRAVSSLCRASGSTRTWAPAALNVPSWPEQPRRHY). N6-acetyllysine is present on residues Lys45, Lys48, Lys67, and Lys69. 2 positions are modified to N6-acetyllysine; alternate: Lys80 and Lys106. N6-succinyllysine; alternate occurs at positions 80 and 106. NADP(+)-binding positions include 115-117 (TIT) and Arg122. Thr117 serves as a coordination point for D-threo-isocitrate. Residues 134–140 (SPNGTIR) and Arg149 each bind D-threo-isocitrate. Residue Lys155 is modified to N6-acetyllysine. Lys166 carries the N6-acetyllysine; alternate modification. Lys166 carries the post-translational modification N6-succinyllysine; alternate. Arg172 lines the D-threo-isocitrate pocket. Lys180 and Lys193 each carry N6-acetyllysine; alternate. N6-succinyllysine; alternate occurs at positions 180 and 193. Lys199 is subject to N6-acetyllysine. Lys256 carries the N6-acetyllysine; alternate modification. The residue at position 256 (Lys256) is an N6-succinyllysine; alternate. An N6-acetyllysine mark is found at Lys263, Lys272, Lys275, and Lys280. At Lys282 the chain carries N6-acetyllysine; alternate. At Lys282 the chain carries N6-succinyllysine; alternate. Asp291 serves as a coordination point for Mn(2+). NADP(+) is bound at residue Lys299. A Mn(2+)-binding site is contributed by Asp314. NADP(+) contacts are provided by residues 349–354 (GTVTRH) and Asn367. N6-acetyllysine; alternate is present on Lys384. An N6-succinyllysine; alternate modification is found at Lys384. 3 positions are modified to N6-acetyllysine: Lys400, Lys413, and Lys442.

This sequence belongs to the isocitrate and isopropylmalate dehydrogenases family. In terms of assembly, homodimer. Mg(2+) serves as cofactor. It depends on Mn(2+) as a cofactor. Acetylation at Lys-413 dramatically reduces catalytic activity. Deacetylated by SIRT3.

Its subcellular location is the mitochondrion. It carries out the reaction D-threo-isocitrate + NADP(+) = 2-oxoglutarate + CO2 + NADPH. Functionally, plays a role in intermediary metabolism and energy production. It may tightly associate or interact with the pyruvate dehydrogenase complex. This Rattus norvegicus (Rat) protein is Isocitrate dehydrogenase [NADP], mitochondrial (Idh2).